Reading from the N-terminus, the 421-residue chain is Histidine--tRNA ligase (421 aa).

This sequence belongs to the class-II aminoacyl-tRNA synthetase family. As to quaternary structure, homodimer.

Its subcellular location is the cytoplasm. It carries out the reaction tRNA(His) + L-histidine + ATP = L-histidyl-tRNA(His) + AMP + diphosphate + H(+). In Caldicellulosiruptor bescii (strain ATCC BAA-1888 / DSM 6725 / KCTC 15123 / Z-1320) (Anaerocellum thermophilum), this protein is Histidine--tRNA ligase.